Reading from the N-terminus, the 859-residue chain is Tripartite terminase subunit 1 (859 aa).

The segment at 231–259 (CCICLDELSVTANQGDTIYKRLGYSVCDH) adopts a C3H1-type zinc-finger fold. A compositionally biased stretch (basic and acidic residues) spans 512–525 (TRPRADKAGGRAED). Residues 512-542 (TRPRADKAGGRAEDGAGDCDDEGYPGAADAT) are disordered. 782–789 (FESIFQCG) is an ATP binding site.

The protein belongs to the herpesviridae TRM1 protein family. In terms of assembly, associates with TRM2 and TRM3 to form the tripartite terminase complex. Interacts with portal protein.

The protein localises to the host nucleus. Its function is as follows. Component of the molecular motor that translocates viral genomic DNA in empty capsid during DNA packaging. Forms a tripartite terminase complex together with TRM2 and TRM3 in the host cytoplasm. Once the complex reaches the host nucleus, it interacts with the capsid portal vertex. This portal forms a ring in which genomic DNA is translocated into the capsid. TRM1 carries an endonuclease activity that plays an important role for the cleavage of concatemeric viral DNA into unit length genomes. The sequence is that of Tripartite terminase subunit 1 from Amazona oratrix (yellow-headed parrot).